A 307-amino-acid chain; its full sequence is Dimethyladenosine transferase (307 aa).

Positions 31, 33, 58, 79, 107, and 122 each coordinate S-adenosyl-L-methionine.

This sequence belongs to the class I-like SAM-binding methyltransferase superfamily. rRNA adenine N(6)-methyltransferase family.

It catalyses the reaction adenosine(1779)/adenosine(1780) in 18S rRNA + 4 S-adenosyl-L-methionine = N(6)-dimethyladenosine(1779)/N(6)-dimethyladenosine(1780) in 18S rRNA + 4 S-adenosyl-L-homocysteine + 4 H(+). Specifically dimethylates two adjacent adenosines in the loop of a conserved hairpin near the 3'-end of 18S rRNA in the 40S particle. This chain is Dimethyladenosine transferase (dim1), found in Schizosaccharomyces pombe (strain 972 / ATCC 24843) (Fission yeast).